Here is a 303-residue protein sequence, read N- to C-terminus: Recombination-associated protein RdgC (303 aa).

This sequence belongs to the RdgC family.

It localises to the cytoplasm. Its subcellular location is the nucleoid. Its function is as follows. May be involved in recombination. The chain is Recombination-associated protein RdgC from Pseudoalteromonas translucida (strain TAC 125).